The primary structure comprises 756 residues: NUT family member 2F (756 aa).

Disordered stretches follow at residues 173–200, 293–438, 511–639, and 653–756; these read GNAR…PDDS, IQKS…TSDP, RAAP…LPGM, and RLSQ…HCSQ. Positions 304 to 321 are enriched in pro residues; it reads SLPPPAPPRLEPRGPPAP. A compositionally biased stretch (basic and acidic residues) spans 417–427; sequence EGQREKGKVEQ. The segment covering 543-560 has biased composition (polar residues); the sequence is QRVSVETSPPQTAAQDPQ. The span at 654–665 shows a compositional bias: low complexity; it reads LSQSPVPSSGLL. Residues 746–756 show a composition bias toward basic residues; the sequence is SRRKKKRHCSQ.

This sequence belongs to the NUT family.

The protein is NUT family member 2F (NUTM2F) of Homo sapiens (Human).